A 338-amino-acid chain; its full sequence is L-serine dehydratase (338 aa).

K39 is modified (N6-(pyridoxal phosphate)lysine).

This sequence belongs to the serine/threonine dehydratase family. Pyridoxal 5'-phosphate serves as cofactor.

Its subcellular location is the cytoplasm. The catalysed reaction is L-serine = pyruvate + NH4(+). Its pathway is carbohydrate biosynthesis; gluconeogenesis. The protein is L-serine dehydratase (SDL1) of Saccharomyces cerevisiae (Baker's yeast).